A 204-amino-acid polypeptide reads, in one-letter code: Hydrophilin YNL190W (204 aa).

A signal peptide spans 1–20 (MKFSSVTAITLATVATVATA). A compositionally biased stretch (low complexity) spans 35-46 (SDGSLTTTTSTH). Residues 35–179 (SDGSLTTTTS…ARKNNAAPGP (145 aa)) form a disordered region. Residues 47–59 (TTHKYGKFNKTSK) are compositionally biased toward basic residues. N-linked (GlcNAc...) asparagine glycans are attached at residues asparagine 55, asparagine 64, asparagine 75, asparagine 84, asparagine 95, asparagine 104, asparagine 115, asparagine 124, asparagine 135, asparagine 144, and asparagine 155. Residues 67-79 (GTHKYGKFNKTSK) are compositionally biased toward basic residues. Basic residues predominate over residues 87 to 99 (GTHKYGKFNKTSK). Positions 107-119 (GTHKYGKFNKTSK) are enriched in basic residues. Positions 127–139 (GTHKYGKFNKTSK) are enriched in basic residues. Positions 147 to 156 (GTHKYGKFNK) are enriched in basic residues. A lipid anchor (GPI-anchor amidated asparagine) is attached at asparagine 174. Positions 175–204 (AAPGPSNFNSIKLFGVTAGSAAVAGALLLL) are cleaved as a propeptide — removed in mature form.

This sequence belongs to the PGA14 family. Post-translationally, the GPI-anchor is attached to the protein in the endoplasmic reticulum and serves to target the protein to the cell surface. There, the glucosamine-inositol phospholipid moiety is cleaved off and the GPI-modified mannoprotein is covalently attached via its lipidless GPI glycan remnant to the 1,6-beta-glucan of the outer cell wall layer.

It localises to the secreted. The protein resides in the cell wall. Its subcellular location is the membrane. Hydrophilin which is essential to overcome the simple stress of the desiccation-rehydration process. The chain is Hydrophilin YNL190W from Saccharomyces cerevisiae (strain ATCC 204508 / S288c) (Baker's yeast).